The chain runs to 299 residues: Farnesyl diphosphate synthase (299 aa).

Isopentenyl diphosphate is bound by residues K45, R48, and H77. 2 residues coordinate Mg(2+): D84 and D90. (2E)-geranyl diphosphate is bound at residue R95. R96 contacts isopentenyl diphosphate. The (2E)-geranyl diphosphate site is built by K181, T182, Q220, and K237.

It belongs to the FPP/GGPP synthase family. Mg(2+) serves as cofactor.

Its subcellular location is the cytoplasm. The catalysed reaction is isopentenyl diphosphate + (2E)-geranyl diphosphate = (2E,6E)-farnesyl diphosphate + diphosphate. This Escherichia coli (strain K12) protein is Farnesyl diphosphate synthase (ispA).